We begin with the raw amino-acid sequence, 270 residues long: Pyrroline-5-carboxylate reductase (270 aa).

The protein belongs to the pyrroline-5-carboxylate reductase family.

Its subcellular location is the cytoplasm. It catalyses the reaction L-proline + NADP(+) = (S)-1-pyrroline-5-carboxylate + NADPH + 2 H(+). The enzyme catalyses L-proline + NAD(+) = (S)-1-pyrroline-5-carboxylate + NADH + 2 H(+). The protein operates within amino-acid biosynthesis; L-proline biosynthesis; L-proline from L-glutamate 5-semialdehyde: step 1/1. In terms of biological role, catalyzes the reduction of 1-pyrroline-5-carboxylate (PCA) to L-proline. This Methanosarcina acetivorans (strain ATCC 35395 / DSM 2834 / JCM 12185 / C2A) protein is Pyrroline-5-carboxylate reductase.